A 324-amino-acid polypeptide reads, in one-letter code: Lactonase drp35 (324 aa).

Positions 47, 109, 111, 129, 132, 134, 137, 184, 235, and 236 each coordinate Ca(2+). Residue aspartate 235 is the Proton donor of the active site.

This sequence belongs to the SMP-30/CGR1 family. The cofactor is Ca(2+).

It localises to the cytoplasm. Its function is as follows. Exhibits lactonase activity. Acts in cells with perturbed membrane integrity and is possibly related to the membrane homeostasis. In Staphylococcus aureus (strain bovine RF122 / ET3-1), this protein is Lactonase drp35 (drp35).